A 716-amino-acid polypeptide reads, in one-letter code: Translation initiation factor IF-2 (716 aa).

The interval 53-135 is disordered; the sequence is GGAGVTSQKP…PLKPKKELPE (83 aa). Residues 57–83 show a composition bias toward polar residues; sequence VTSQKPAETNKNKPQGINQQPAGNQPN. Positions 93 to 109 are enriched in low complexity; sequence VQNNQFNKNKKNNNNNK. The region spanning 217–386 is the tr-type G domain; that stretch reads IRPPVVTIMG…LLVSEVEELK (170 aa). The segment at 226 to 233 is G1; sequence GHVDHGKT. Position 226-233 (226-233) interacts with GTP; that stretch reads GHVDHGKT. Residues 251–255 are G2; the sequence is GITQH. The interval 272 to 275 is G3; the sequence is DTPG. GTP contacts are provided by residues 272–276 and 326–329; these read DTPGH and NKVD. The segment at 326–329 is G4; the sequence is NKVD. The segment at 362–364 is G5; the sequence is SAL.

The protein belongs to the TRAFAC class translation factor GTPase superfamily. Classic translation factor GTPase family. IF-2 subfamily.

It is found in the cytoplasm. Its function is as follows. One of the essential components for the initiation of protein synthesis. Protects formylmethionyl-tRNA from spontaneous hydrolysis and promotes its binding to the 30S ribosomal subunits. Also involved in the hydrolysis of GTP during the formation of the 70S ribosomal complex. The chain is Translation initiation factor IF-2 from Bacillus velezensis (strain DSM 23117 / BGSC 10A6 / LMG 26770 / FZB42) (Bacillus amyloliquefaciens subsp. plantarum).